The following is a 388-amino-acid chain: Nuclear hormone receptor family member nhr-16 (388 aa).

A DNA-binding region (nuclear receptor) is located at residues 11–86; that stretch reads FLKCAICQES…VGMNPAGVQQ (76 aa). 2 consecutive NR C4-type zinc fingers follow at residues 14 to 34 and 50 to 74; these read CAIC…CRAC and CQGN…YIKC. The region spanning 115–387 is the NR LBD domain; that stretch reads PPSSLMLHIP…DEFYNLMSGR (273 aa).

Belongs to the nuclear hormone receptor family.

It is found in the nucleus. Orphan nuclear receptor. This is Nuclear hormone receptor family member nhr-16 (nhr-16) from Caenorhabditis elegans.